We begin with the raw amino-acid sequence, 255 residues long: uncharacterized protein (255 aa).

This is an uncharacterized protein from Acanthamoeba polyphaga mimivirus (APMV).